The chain runs to 277 residues: Formamidopyrimidine-DNA glycosylase (277 aa).

P2 (schiff-base intermediate with DNA) is an active-site residue. Residue E3 is the Proton donor of the active site. Catalysis depends on K60, which acts as the Proton donor; for beta-elimination activity. Residues H94, R113, and R158 each contribute to the DNA site. The FPG-type zinc finger occupies 243 to 277 (WVYNRAGEPCKVCGDVIQRIKLGGRSSHFCRQCQV). R267 functions as the Proton donor; for delta-elimination activity in the catalytic mechanism.

The protein belongs to the FPG family. In terms of assembly, monomer. Zn(2+) serves as cofactor.

The enzyme catalyses Hydrolysis of DNA containing ring-opened 7-methylguanine residues, releasing 2,6-diamino-4-hydroxy-5-(N-methyl)formamidopyrimidine.. The catalysed reaction is 2'-deoxyribonucleotide-(2'-deoxyribose 5'-phosphate)-2'-deoxyribonucleotide-DNA = a 3'-end 2'-deoxyribonucleotide-(2,3-dehydro-2,3-deoxyribose 5'-phosphate)-DNA + a 5'-end 5'-phospho-2'-deoxyribonucleoside-DNA + H(+). Functionally, involved in base excision repair of DNA damaged by oxidation or by mutagenic agents. Acts as a DNA glycosylase that recognizes and removes damaged bases. Has a preference for oxidized purines, such as 7,8-dihydro-8-oxoguanine (8-oxoG). Has AP (apurinic/apyrimidinic) lyase activity and introduces nicks in the DNA strand. Cleaves the DNA backbone by beta-delta elimination to generate a single-strand break at the site of the removed base with both 3'- and 5'-phosphates. In Trichormus variabilis (strain ATCC 29413 / PCC 7937) (Anabaena variabilis), this protein is Formamidopyrimidine-DNA glycosylase.